Consider the following 643-residue polypeptide: MFGIVYLKNRSLLCKNPFSSYPRYGFMPSFDTQFSNQFRKLEINIGRKRYSSKTLNTKYTDQPEGPIYPLDVLRLDISKALHDISGIDHSLILNALESTNSMDRGDLLLPLPKIKVADPVAVANRWAIELSTHGCIGKVCAKGPFLQFFLDQRYLIQSTVPNILLQKGKYGQKKSRHQKKVVVEFSSPNIAKPFHAGHLRSTIIGGFLSNLYEAMGWSVTRMNYLGDWGRQFGLLAVGFKRYGDEKTLQKQPIQHLFDVYVKINMDLAKEEINGNSKCGISGEARSFFKNLENGDENAIKIWNRFRSLSIHHYIQTYSRLNINFDIFSGESQVSKESMNEALDIFRKNNLVKEIDGALVIDLTQWSKRLGRVVVQKSDGTTLYLTRDVGAAIERKKNLHFDKMVYVISSQQDLYMSQFFMILKKMNFEWAKDLQHINFGMVQGMSTRKGNVVFLDTILDEARDKALQIMENNKMKISQVDNPQRVADLIGVSAIIIQDMKSKRINNYEFNWNRMLSFEGDTGPYLQYTHSRLRSLERTSSDFTTDMLIHADFSNLNEPQLVELVRLLAQYPDVLRRAFETQEPATIVTYLFKVCHQVSSCYKKIWVSGKPADIAIPRLAVYSASRQVLHNAMSLLGLVPVDRM.

Residues P188–H198 carry the 'HIGH' region motif.

Belongs to the class-I aminoacyl-tRNA synthetase family.

Its subcellular location is the mitochondrion matrix. The catalysed reaction is tRNA(Arg) + L-arginine + ATP = L-arginyl-tRNA(Arg) + AMP + diphosphate. This is Arginine--tRNA ligase, mitochondrial (MSR1) from Saccharomyces cerevisiae (strain ATCC 204508 / S288c) (Baker's yeast).